The following is a 301-amino-acid chain: D-alanine--D-alanine ligase (301 aa).

The 196-residue stretch at Lys-99 to Asp-294 folds into the ATP-grasp domain. An ATP-binding site is contributed by Ile-126–Thr-181. Mg(2+) is bound by residues Asp-248, Glu-261, and Asn-263.

Belongs to the D-alanine--D-alanine ligase family. It depends on Mg(2+) as a cofactor. Mn(2+) is required as a cofactor.

The protein localises to the cytoplasm. It carries out the reaction 2 D-alanine + ATP = D-alanyl-D-alanine + ADP + phosphate + H(+). Its pathway is cell wall biogenesis; peptidoglycan biosynthesis. Its function is as follows. Cell wall formation. This chain is D-alanine--D-alanine ligase, found in Clostridium botulinum (strain Alaska E43 / Type E3).